A 420-amino-acid polypeptide reads, in one-letter code: D-tagatose-1,6-bisphosphate aldolase subunit GatZ (420 aa).

It belongs to the GatZ/KbaZ family. GatZ subfamily. Forms a complex with GatY.

It functions in the pathway carbohydrate metabolism; D-tagatose 6-phosphate degradation; D-glyceraldehyde 3-phosphate and glycerone phosphate from D-tagatose 6-phosphate: step 2/2. Functionally, component of the tagatose-1,6-bisphosphate aldolase GatYZ that is required for full activity and stability of the Y subunit. Could have a chaperone-like function for the proper and stable folding of GatY. When expressed alone, GatZ does not show any aldolase activity. Is involved in the catabolism of galactitol. The polypeptide is D-tagatose-1,6-bisphosphate aldolase subunit GatZ (Escherichia coli O45:K1 (strain S88 / ExPEC)).